Consider the following 193-residue polypeptide: Bcl-2-binding component 3, isoforms 1/2 (193 aa).

Disordered regions lie at residues 1–28 (MARA…FPLG) and 71–138 (ALGG…REIG). S10 is modified (phosphoserine). The segment covering 71–82 (ALGGSRWPGGPR) has biased composition (low complexity). Residues 137–151 (IGAQLRRMADDLNAQ) carry the BH3 motif.

This sequence belongs to the Bcl-2 family. As to quaternary structure, interacts with MCL1 and BCL2A1. Interacts (via BH3 domain) with BCL2. Interacts with BCL2L1/BCL-XL. Interacts (via BH3 domain) with NOL3/ARC (via CARD domain); this interaction prevents BBC3 association with BCL2 and results in CASP8 activation. In terms of tissue distribution, ubiquitously expressed.

The protein resides in the mitochondrion. Essential mediator of p53/TP53-dependent and p53/TP53-independent apoptosis. Promotes partial unfolding of BCL2L1 and dissociation of BCL2L1 from p53/TP53, releasing the bound p53/TP53 to induce apoptosis. Regulates ER stress-induced neuronal apoptosis. The chain is Bcl-2-binding component 3, isoforms 1/2 (BBC3) from Homo sapiens (Human).